A 23-amino-acid chain; its full sequence is Aurein-4.3 (23 aa).

This sequence belongs to the frog skin active peptide (FSAP) family. Aurein subfamily. Expressed by the skin dorsal glands.

It is found in the secreted. Has no antimicrobial or anticancer activity. The sequence is that of Aurein-4.3 from Ranoidea aurea (Green and golden bell frog).